The chain runs to 177 residues: Large ribosomal subunit protein uL6 (177 aa).

Belongs to the universal ribosomal protein uL6 family. Part of the 50S ribosomal subunit.

Functionally, this protein binds to the 23S rRNA, and is important in its secondary structure. It is located near the subunit interface in the base of the L7/L12 stalk, and near the tRNA binding site of the peptidyltransferase center. The chain is Large ribosomal subunit protein uL6 from Methylococcus capsulatus (strain ATCC 33009 / NCIMB 11132 / Bath).